Consider the following 255-residue polypeptide: uncharacterized protein (255 aa).

2 helical membrane-spanning segments follow: residues 2 to 22 (LLPA…YGVL) and 168 to 188 (VASV…FNLF).

The protein resides in the cell membrane. This is an uncharacterized protein from Mycobacterium tuberculosis (strain ATCC 25618 / H37Rv).